We begin with the raw amino-acid sequence, 312 residues long: Acetyl-coenzyme A carboxylase carboxyl transferase subunit alpha (312 aa).

Positions 36 to 286 (NLEKEISKTY…ADYVKKSLNE (251 aa)) constitute a CoA carboxyltransferase C-terminal domain.

This sequence belongs to the AccA family. In terms of assembly, acetyl-CoA carboxylase is a heterohexamer composed of biotin carboxyl carrier protein (AccB), biotin carboxylase (AccC) and two subunits each of ACCase subunit alpha (AccA) and ACCase subunit beta (AccD).

Its subcellular location is the cytoplasm. The catalysed reaction is N(6)-carboxybiotinyl-L-lysyl-[protein] + acetyl-CoA = N(6)-biotinyl-L-lysyl-[protein] + malonyl-CoA. It participates in lipid metabolism; malonyl-CoA biosynthesis; malonyl-CoA from acetyl-CoA: step 1/1. Component of the acetyl coenzyme A carboxylase (ACC) complex. First, biotin carboxylase catalyzes the carboxylation of biotin on its carrier protein (BCCP) and then the CO(2) group is transferred by the carboxyltransferase to acetyl-CoA to form malonyl-CoA. This Campylobacter jejuni subsp. jejuni serotype O:23/36 (strain 81-176) protein is Acetyl-coenzyme A carboxylase carboxyl transferase subunit alpha.